We begin with the raw amino-acid sequence, 455 residues long: P2X purinoceptor 5 (455 aa).

The Cytoplasmic portion of the chain corresponds to 1-34; sequence MGQAAWKGFVLSLFDYKTAKFVVAKSKKVGLLYR. The chain crosses the membrane as a helical span at residues 35 to 55; sequence VLQLIILLYLLIWVFLIKKSY. Over 56-341 the chain is Extracellular; that stretch reads QDIDTSLQSA…SIIPTVINIG (286 aa). ATP-binding residues include K69 and K71. N77 is a glycosylation site (N-linked (GlcNAc...) asparagine). 3 cysteine pairs are disulfide-bonded: C118–C169, C129–C152, and C135–C163. Residue N157 is glycosylated (N-linked (GlcNAc...) asparagine). T189 provides a ligand contact to ATP. An N-linked (GlcNAc...) asparagine glycan is attached at N202. Disulfide bonds link C220-C229 and C263-C272. Residues N294, R296, and K314 each coordinate ATP. A helical membrane pass occupies residues 342–362; sequence SGLALMGAGAFFCDLVLIYLI. The Cytoplasmic portion of the chain corresponds to 363–455; the sequence is RKSEFYRDKK…QSQILHPVKT (93 aa). Over residues 384-401 the composition is skewed to acidic residues; it reads NVEVEANEMEQERPEDEP. Positions 384–422 are disordered; sequence NVEVEANEMEQERPEDEPLERVRQDEQSQELAQSGRKQN. Residues 412–422 are compositionally biased toward polar residues; sequence QELAQSGRKQN.

Belongs to the P2X receptor family. Functional P2XRs are organized as homomeric and heteromeric trimers. Homotrimer. Forms heterotrimer with P2RX1. In terms of tissue distribution, predominantly expressed in heart but are also present in brain, spinal cord and adrenal gland.

The protein localises to the cell membrane. It carries out the reaction Na(+)(in) = Na(+)(out). The catalysed reaction is Ca(2+)(in) = Ca(2+)(out). It catalyses the reaction chloride(in) = chloride(out). Activated by ATP. Slowly desensitizing. Not activated by ATP agonist alpha/beta-methylene-ATP. Highly sensitive to the antagonists suramin and PPADS. Functionally, ATP-gated nonselective transmembrane cation channel. Permeable to potassium, sodium and calcium. Unlike other P2RX receptors, the P2X5 receptor is also permeable to chloride. Acts as an important regulator of inflammatory-related bone loss and osteoclast multinucleation. The polypeptide is P2X purinoceptor 5 (P2rx5) (Rattus norvegicus (Rat)).